The sequence spans 884 residues: Putative GTP diphosphokinase RSH1, chloroplastic (884 aa).

Residues 1-55 (MTSASSMSVSVECVNICNLTKGDGNARSDCSALSCAWKAPRALTGFLASTAHPPV) constitute a chloroplast transit peptide. The HD domain maps to 172–279 (FIIHPVAVAR…VKLADRLHNM (108 aa)). The TGS domain maps to 563–626 (LGSRVFVFTP…ENAEVVEIVT (64 aa)). Over residues 711 to 727 (QSQDKSRDTTPAPQNGS) the composition is skewed to polar residues. The tract at residues 711 to 747 (QSQDKSRDTTPAPQNGSVWAPKVNGKHNKAIKNSSSD) is disordered. The ACT domain maps to 797–868 (WLCVVSMDRK…LVLGVLGWSS (72 aa)).

The protein belongs to the RelA/SpoT family. Interacts with RPP4. Interacts with RPP5. Expressed in hypocotyls, shoots, cotyledons, rosette leaves, sepals and pistils.

The protein localises to the plastid. It localises to the chloroplast. The enzyme catalyses GTP + ATP = guanosine 3'-diphosphate 5'-triphosphate + AMP. May be involved in a rapid plant ppGpp (guanosine 3'-diphosphate 5'-diphosphate)-mediated response to pathogens and other stresses. Unable to functionally complement E.coli relA mutants. The chain is Putative GTP diphosphokinase RSH1, chloroplastic (RSH1) from Arabidopsis thaliana (Mouse-ear cress).